The chain runs to 476 residues: NADH-quinone oxidoreductase subunit N (476 aa).

14 helical membrane-spanning segments follow: residues 10 to 30, 42 to 62, 77 to 97, 108 to 128, 129 to 149, 162 to 182, 202 to 222, 234 to 254, 268 to 288, 296 to 316, 323 to 343, 368 to 388, 392 to 412, and 445 to 465; these read AVLP…IGAI, LAIA…AVTI, FMKV…VDWL, AVLV…GDLI, ALYL…AINR, FVLG…IYGF, LVFG…AVPF, PTPV…AVFV, WQQI…FAAI, LLAY…AAGT, VLLY…CVLA, ALAL…AGFV, YVFL…GVVA, and AVLA…TPLI.

Belongs to the complex I subunit 2 family. As to quaternary structure, NDH-1 is composed of 14 different subunits. Subunits NuoA, H, J, K, L, M, N constitute the membrane sector of the complex.

It localises to the cell inner membrane. The enzyme catalyses a quinone + NADH + 5 H(+)(in) = a quinol + NAD(+) + 4 H(+)(out). NDH-1 shuttles electrons from NADH, via FMN and iron-sulfur (Fe-S) centers, to quinones in the respiratory chain. The immediate electron acceptor for the enzyme in this species is believed to be ubiquinone. Couples the redox reaction to proton translocation (for every two electrons transferred, four hydrogen ions are translocated across the cytoplasmic membrane), and thus conserves the redox energy in a proton gradient. The protein is NADH-quinone oxidoreductase subunit N of Azorhizobium caulinodans (strain ATCC 43989 / DSM 5975 / JCM 20966 / LMG 6465 / NBRC 14845 / NCIMB 13405 / ORS 571).